A 269-amino-acid chain; its full sequence is uncharacterized protein (269 aa).

Positions 14-89 (FEYEIQVNRP…KLREPRLRDR (76 aa)) constitute an ACT domain.

This is an uncharacterized protein from Bacillus subtilis (strain 168).